A 258-amino-acid polypeptide reads, in one-letter code: Small ribosomal subunit protein uS2 (258 aa).

Belongs to the universal ribosomal protein uS2 family.

The chain is Small ribosomal subunit protein uS2 from Streptococcus suis (strain 05ZYH33).